The chain runs to 383 residues: UDP-N-acetylenolpyruvoylglucosamine reductase (383 aa).

The segment covering 1-13 (MRTRRDVPADRSG) has biased composition (basic and acidic residues). Residues 1 to 26 (MRTRRDVPADRSGRSRVSRHPGLSVP) are disordered. An FAD-binding PCMH-type domain is found at 49 to 215 (LGGPATRLLT…LRVRFELENA (167 aa)). The active site involves Arg192. Residue Ser271 is the Proton donor of the active site. Residue Glu375 is part of the active site.

Belongs to the MurB family. The cofactor is FAD.

It is found in the cytoplasm. It catalyses the reaction UDP-N-acetyl-alpha-D-muramate + NADP(+) = UDP-N-acetyl-3-O-(1-carboxyvinyl)-alpha-D-glucosamine + NADPH + H(+). Its pathway is cell wall biogenesis; peptidoglycan biosynthesis. Cell wall formation. The protein is UDP-N-acetylenolpyruvoylglucosamine reductase of Streptomyces coelicolor (strain ATCC BAA-471 / A3(2) / M145).